Consider the following 335-residue polypeptide: Trans-1,2-dihydrobenzene-1,2-diol dehydrogenase (335 aa).

This sequence belongs to the Gfo/Idh/MocA family. Homodimer. As to expression, liver, lens, spleen, kidney and small intestine.

The catalysed reaction is (1R,2R)-1,2-dihydrobenzene-1,2-diol + NADP(+) = catechol + NADPH + H(+). It carries out the reaction D-xylose + NADP(+) = D-xylono-1,5-lactone + NADPH + H(+). Strongly inhibited by isoascorbic acid, 4-hydroxyacetophenone and chloromercuriphenylsulphonate. Stimulated by various salts. The polypeptide is Trans-1,2-dihydrobenzene-1,2-diol dehydrogenase (DHDH) (Sus scrofa (Pig)).